A 362-amino-acid chain; its full sequence is Ribosome-binding ATPase YchF (362 aa).

Residues 2-258 (LSAGIVGLPN…LDANGRQDWL (257 aa)) form the OBG-type G domain. Residue 11–16 (NVGKST) participates in ATP binding. Residues Ser-15 and Thr-35 each coordinate Mg(2+). Residues 281-347 (GLWSFFTFGK…EAKKQGLVRL (67 aa)) enclose the TGS domain.

This sequence belongs to the TRAFAC class OBG-HflX-like GTPase superfamily. OBG GTPase family. YchF/OLA1 subfamily. It depends on Mg(2+) as a cofactor.

Functionally, ATPase that binds to both the 70S ribosome and the 50S ribosomal subunit in a nucleotide-independent manner. This is Ribosome-binding ATPase YchF from Mycoplasma pneumoniae (strain ATCC 29342 / M129 / Subtype 1) (Mycoplasmoides pneumoniae).